The sequence spans 115 residues: MEARAQARYIRVTPMKARRVVDLIRGMDATEAQAVLRFAPQAASVPVGKVLDSAIANAAHNYDHTDADSLFISEAYVDEGPTLKRFRPRAQGRAYRIRKRTSHITVVVSSKEGTR.

Belongs to the universal ribosomal protein uL22 family. Part of the 50S ribosomal subunit.

In terms of biological role, this protein binds specifically to 23S rRNA; its binding is stimulated by other ribosomal proteins, e.g. L4, L17, and L20. It is important during the early stages of 50S assembly. It makes multiple contacts with different domains of the 23S rRNA in the assembled 50S subunit and ribosome. Its function is as follows. The globular domain of the protein is located near the polypeptide exit tunnel on the outside of the subunit, while an extended beta-hairpin is found that lines the wall of the exit tunnel in the center of the 70S ribosome. This is Large ribosomal subunit protein uL22 from Streptomyces avermitilis (strain ATCC 31267 / DSM 46492 / JCM 5070 / NBRC 14893 / NCIMB 12804 / NRRL 8165 / MA-4680).